The primary structure comprises 453 residues: Adenylyltransferase and sulfurtransferase MOCS3 (453 aa).

Position 62 is a phosphothreonine (Thr62). ATP is bound by residues Gly101, Asp122, 129-133, Lys146, and 190-191; these read SNFHR and DN. Residues Cys231 and Cys234 each coordinate Zn(2+). Cys248 acts as the Glycyl thioester intermediate; for adenylyltransferase activity in catalysis. Cys306 and Cys309 together coordinate Zn(2+). The Rhodanese domain maps to 355 to 451; the sequence is QAQPHLLIDV…WTNSVDPSFP (97 aa). Cys410 serves as the catalytic Cysteine persulfide intermediate; for sulfurtransferase activity.

This sequence in the N-terminal section; belongs to the HesA/MoeB/ThiF family. UBA4 subfamily. Zn(2+) is required as a cofactor.

The protein localises to the cytoplasm. Its subcellular location is the cytosol. The catalysed reaction is [molybdopterin-synthase sulfur-carrier protein]-C-terminal Gly-Gly + ATP + H(+) = [molybdopterin-synthase sulfur-carrier protein]-C-terminal Gly-Gly-AMP + diphosphate. It carries out the reaction [molybdopterin-synthase sulfur-carrier protein]-C-terminal Gly-Gly-AMP + S-sulfanyl-L-cysteinyl-[cysteine desulfurase] + AH2 = [molybdopterin-synthase sulfur-carrier protein]-C-terminal-Gly-aminoethanethioate + L-cysteinyl-[cysteine desulfurase] + A + AMP + 2 H(+). Its pathway is tRNA modification; 5-methoxycarbonylmethyl-2-thiouridine-tRNA biosynthesis. It functions in the pathway cofactor biosynthesis; molybdopterin biosynthesis. Its function is as follows. Plays a central role in 2-thiolation of mcm(5)S(2)U at tRNA wobble positions of cytosolic tRNA(Lys), tRNA(Glu) and tRNA(Gln). Also essential during biosynthesis of the molybdenum cofactor. Acts by mediating the C-terminal thiocarboxylation of sulfur carriers URM1 and MOCS2A. Its N-terminus first activates URM1 and MOCS2A as acyl-adenylates (-COAMP), then the persulfide sulfur on the catalytic cysteine is transferred to URM1 and MOCS2A to form thiocarboxylation (-COSH) of their C-terminus. The reaction probably involves hydrogen sulfide that is generated from the persulfide intermediate and that acts as a nucleophile towards URM1 and MOCS2A. Subsequently, a transient disulfide bond is formed. Does not use thiosulfate as sulfur donor; NFS1 probably acting as a sulfur donor for thiocarboxylation reactions. The protein is Adenylyltransferase and sulfurtransferase MOCS3 of Drosophila yakuba (Fruit fly).